We begin with the raw amino-acid sequence, 139 residues long: ATP synthase epsilon chain (139 aa).

The protein belongs to the ATPase epsilon chain family. As to quaternary structure, F-type ATPases have 2 components, CF(1) - the catalytic core - and CF(0) - the membrane proton channel. CF(1) has five subunits: alpha(3), beta(3), gamma(1), delta(1), epsilon(1). CF(0) has three main subunits: a, b and c.

It localises to the cell inner membrane. Its function is as follows. Produces ATP from ADP in the presence of a proton gradient across the membrane. The protein is ATP synthase epsilon chain of Escherichia coli O139:H28 (strain E24377A / ETEC).